Reading from the N-terminus, the 217-residue chain is Trimethylamine corrinoid protein (217 aa).

Positions 1–92 (MANKEEIIAK…EMEKRKSQTK (92 aa)) constitute a B12-binding N-terminal domain. Positions 94 to 217 (LGTVAIGTIE…VAKVKAALNV (124 aa)) constitute a B12-binding domain. Histidine 107 serves as a coordination point for methylcob(III)alamin.

This sequence belongs to the methylamine corrinoid protein family. As to quaternary structure, can form a complex with MttB.

It functions in the pathway one-carbon metabolism; methanogenesis from trimethylamine. Acts probably as a methyl group carrier between MttB and either MtbA or MtaA. This Methanosarcina barkeri protein is Trimethylamine corrinoid protein.